A 398-amino-acid polypeptide reads, in one-letter code: Leucine aminopeptidase 1 (398 aa).

A signal peptide spans 1–20 (MKFLQTSLIAAALPAALVSG). A propeptide spanning residues 21 to 87 (RFVIENEGDN…LRAWTQSQAS (67 aa)) is cleaved from the precursor. A glycan (N-linked (GlcNAc...) asparagine) is linked at N179. Residues H187, D206, E245, and D272 each contribute to the Zn(2+) site. A disulfide bridge connects residues C321 and C325. A Zn(2+)-binding site is contributed by H354.

It belongs to the peptidase M28 family. M28E subfamily. In terms of assembly, monomer. Zn(2+) serves as cofactor.

Its subcellular location is the secreted. Functionally, extracellular aminopeptidase that allows assimilation of proteinaceous substrates. In Trichoderma harzianum (Hypocrea lixii), this protein is Leucine aminopeptidase 1 (lap1).